The sequence spans 1598 residues: Pentafunctional AROM polypeptide (1598 aa).

Residues 1–384 form a 3-dehydroquinate synthase region; the sequence is MGVPTKISIL…YEPRACTVSN (384 aa). NAD(+) is bound by residues 44–46, 81–84, 114–116, and Asp119; these read DTN, ESSK, and GGV. Arg130 is a binding site for 7-phospho-2-dehydro-3-deoxy-D-arabino-heptonate. Position 139 to 140 (139 to 140) interacts with NAD(+); it reads TT. The 7-phospho-2-dehydro-3-deoxy-D-arabino-heptonate site is built by Asp146 and Lys152. Lys161 lines the NAD(+) pocket. Asn162 contributes to the 7-phospho-2-dehydro-3-deoxy-D-arabino-heptonate binding site. Residues 179-182 and Asn190 contribute to the NAD(+) site; that span reads FLNT. Glu194 is a Zn(2+) binding site. 7-phospho-2-dehydro-3-deoxy-D-arabino-heptonate contacts are provided by residues 194–197 and Lys250; that span reads EVIK. The active-site Proton acceptor; for 3-dehydroquinate synthase activity is the Glu260. 7-phospho-2-dehydro-3-deoxy-D-arabino-heptonate contacts are provided by residues 264-268 and His271; that span reads RNLLN. Zn(2+) is bound at residue His271. The active-site Proton acceptor; for 3-dehydroquinate synthase activity is His275. Positions 287 and 356 each coordinate 7-phospho-2-dehydro-3-deoxy-D-arabino-heptonate. His287 serves as a coordination point for Zn(2+). The interval 397-842 is EPSP synthase; sequence VYPGFPKSLN…WDTLAQTFKV (446 aa). Catalysis depends on Cys824, which acts as the For EPSP synthase activity. The shikimate kinase stretch occupies residues 867 to 1059; sequence AASIFIIGMR…RRKENTFFVS (193 aa). ATP is bound at residue 874–881; it reads GMRGAGKT. Positions 1060–1280 are 3-dehydroquinase; it reads LTFPDLTPAS…AAPGQLSARE (221 aa). Residue His1183 is the Proton acceptor; for 3-dehydroquinate dehydratase activity of the active site. Lys1211 acts as the Schiff-base intermediate with substrate; for 3-dehydroquinate dehydratase activity in catalysis. The interval 1293-1598 is shikimate dehydrogenase; the sequence is AKKFAVIGKP…GVSSSDDIIS (306 aa).

The protein in the N-terminal section; belongs to the sugar phosphate cyclases superfamily. Dehydroquinate synthase family. In the 2nd section; belongs to the EPSP synthase family. It in the 3rd section; belongs to the shikimate kinase family. This sequence in the 4th section; belongs to the type-I 3-dehydroquinase family. The protein in the C-terminal section; belongs to the shikimate dehydrogenase family. Homodimer. It depends on Zn(2+) as a cofactor.

The protein resides in the cytoplasm. The catalysed reaction is 7-phospho-2-dehydro-3-deoxy-D-arabino-heptonate = 3-dehydroquinate + phosphate. It carries out the reaction 3-dehydroquinate = 3-dehydroshikimate + H2O. It catalyses the reaction shikimate + NADP(+) = 3-dehydroshikimate + NADPH + H(+). The enzyme catalyses shikimate + ATP = 3-phosphoshikimate + ADP + H(+). The catalysed reaction is 3-phosphoshikimate + phosphoenolpyruvate = 5-O-(1-carboxyvinyl)-3-phosphoshikimate + phosphate. It participates in metabolic intermediate biosynthesis; chorismate biosynthesis; chorismate from D-erythrose 4-phosphate and phosphoenolpyruvate: step 2/7. It functions in the pathway metabolic intermediate biosynthesis; chorismate biosynthesis; chorismate from D-erythrose 4-phosphate and phosphoenolpyruvate: step 3/7. Its pathway is metabolic intermediate biosynthesis; chorismate biosynthesis; chorismate from D-erythrose 4-phosphate and phosphoenolpyruvate: step 4/7. The protein operates within metabolic intermediate biosynthesis; chorismate biosynthesis; chorismate from D-erythrose 4-phosphate and phosphoenolpyruvate: step 5/7. It participates in metabolic intermediate biosynthesis; chorismate biosynthesis; chorismate from D-erythrose 4-phosphate and phosphoenolpyruvate: step 6/7. In terms of biological role, the AROM polypeptide catalyzes 5 consecutive enzymatic reactions in prechorismate polyaromatic amino acid biosynthesis. The polypeptide is Pentafunctional AROM polypeptide (Paracoccidioides lutzii (strain ATCC MYA-826 / Pb01) (Paracoccidioides brasiliensis)).